Consider the following 205-residue polypeptide: Recombination protein RecR (205 aa).

The segment at 58–75 adopts a C4-type zinc-finger fold; that stretch reads CSECQNVTDRDSDPCVLC. Residues 83–182 enclose the Toprim domain; sequence TVICVVESPV…AVSKIARGIP (100 aa).

Belongs to the RecR family.

Its function is as follows. May play a role in DNA repair. It seems to be involved in an RecBC-independent recombinational process of DNA repair. It may act with RecF and RecO. This chain is Recombination protein RecR, found in Chlorobium phaeobacteroides (strain DSM 266 / SMG 266 / 2430).